We begin with the raw amino-acid sequence, 466 residues long: Asparagine--tRNA ligase (466 aa).

Belongs to the class-II aminoacyl-tRNA synthetase family. In terms of assembly, homodimer.

The protein localises to the cytoplasm. The catalysed reaction is tRNA(Asn) + L-asparagine + ATP = L-asparaginyl-tRNA(Asn) + AMP + diphosphate + H(+). The protein is Asparagine--tRNA ligase of Salmonella typhimurium (strain LT2 / SGSC1412 / ATCC 700720).